The chain runs to 375 residues: Trichodiene synthase (375 aa).

The protein belongs to the trichodiene synthase family.

It carries out the reaction (2E,6E)-farnesyl diphosphate = trichodiene + diphosphate. Its pathway is sesquiterpene biosynthesis; trichothecene biosynthesis. TS is a member of the terpene cyclase group of enzymes. It catalyzes the isomerization and cyclization of farnesyl pyro-phosphate to form trichodiene, the first cyclic intermediate in the biosynthetic pathway for trichothecenes. It serves to branch trichothecene biosynthesis from the isoprenoid pathway. The polypeptide is Trichodiene synthase (TRI5) (Gibberella zeae (strain ATCC MYA-4620 / CBS 123657 / FGSC 9075 / NRRL 31084 / PH-1) (Wheat head blight fungus)).